A 263-amino-acid polypeptide reads, in one-letter code: Small ribosomal subunit protein eS4 (263 aa).

One can recognise an S4 RNA-binding domain in the interval 42 to 104 (LPLIIFLRNR…TGENFRLIYD (63 aa)).

It belongs to the eukaryotic ribosomal protein eS4 family.

This Ictalurus punctatus (Channel catfish) protein is Small ribosomal subunit protein eS4 (rps4).